Reading from the N-terminus, the 477-residue chain is Bifunctional protein HldE (477 aa).

The segment at 1–318 is ribokinase; that stretch reads MKVTLPEFER…ENAVRGRAET (318 aa). An ATP-binding site is contributed by 195–198; the sequence is NLSE. Aspartate 264 is a catalytic residue. Residues 344–477 are cytidylyltransferase; sequence MTNGVFDILH…IKKIQKDSDK (134 aa).

The protein in the N-terminal section; belongs to the carbohydrate kinase PfkB family. In the C-terminal section; belongs to the cytidylyltransferase family. In terms of assembly, homodimer.

It catalyses the reaction D-glycero-beta-D-manno-heptose 7-phosphate + ATP = D-glycero-beta-D-manno-heptose 1,7-bisphosphate + ADP + H(+). The catalysed reaction is D-glycero-beta-D-manno-heptose 1-phosphate + ATP + H(+) = ADP-D-glycero-beta-D-manno-heptose + diphosphate. The protein operates within nucleotide-sugar biosynthesis; ADP-L-glycero-beta-D-manno-heptose biosynthesis; ADP-L-glycero-beta-D-manno-heptose from D-glycero-beta-D-manno-heptose 7-phosphate: step 1/4. It functions in the pathway nucleotide-sugar biosynthesis; ADP-L-glycero-beta-D-manno-heptose biosynthesis; ADP-L-glycero-beta-D-manno-heptose from D-glycero-beta-D-manno-heptose 7-phosphate: step 3/4. In terms of biological role, catalyzes the phosphorylation of D-glycero-D-manno-heptose 7-phosphate at the C-1 position to selectively form D-glycero-beta-D-manno-heptose-1,7-bisphosphate. Catalyzes the ADP transfer from ATP to D-glycero-beta-D-manno-heptose 1-phosphate, yielding ADP-D-glycero-beta-D-manno-heptose. The polypeptide is Bifunctional protein HldE (Klebsiella pneumoniae (strain 342)).